The chain runs to 116 residues: Large ribosomal subunit protein bL17 (116 aa).

Belongs to the bacterial ribosomal protein bL17 family. Part of the 50S ribosomal subunit. Contacts protein L32.

In Helicobacter acinonychis (strain Sheeba), this protein is Large ribosomal subunit protein bL17.